Here is a 549-residue protein sequence, read N- to C-terminus: MFCEQCEQTASGNGCHQWGACGKSPEVNAVQDLLVYCLRGLAPVTIKARELGISCHEADVFTGETLFATMTNVNFERKRFNVYIRQCIHIREGLKNSIEKISKKPISWSEVSNYQPNFSESLAEQGREKDLTFISQSTNNVDIFSLKLTVLYGIKGTASYTFHAQELGQEDEKVYAFIQEALASLDRNDLSLEDWVNIALKVGEINLRAMELLDQGHTTTYGHPTPTKVPLNPKQGKGILVSGHDIKQLAALLQQTVNKGLMVYTHGELLPAHGYPILKEKYPHFYGHYGTAWQNQTKDFAHFPGAIIVTTNCLMPPHETYEDKLFTIGPVGYSGINYLSSDDKGVPDYSLAIETSLKMAGFTTDEAPRHVMVGFAHNTVLNVSEQVIEAVKKGEIRHFFLVGGCDGAKPGRTYYTEFVEKVPKDCIVLTLACGKFRFFDKQLGEIGNLPRLMDVGQCNDAYSAIKIALGLAEAFQVSVNDLPLSMILSWYEQKAVAVLLTLLYLGIKDIRLGPTLPAFITPNVLRFLSETYNLQPITTPDQDLVACLA.

Residues cysteine 3, cysteine 6, cysteine 15, and cysteine 21 each contribute to the [4Fe-4S] cluster site. Positions 244, 268, 313, 405, 433, 458, 492, and 494 each coordinate hybrid [4Fe-2O-2S] cluster. Cysteine persulfide is present on cysteine 405.

The protein belongs to the HCP family. It depends on [4Fe-4S] cluster as a cofactor. Requires hybrid [4Fe-2O-2S] cluster as cofactor.

It localises to the cytoplasm. It carries out the reaction A + NH4(+) + H2O = hydroxylamine + AH2 + H(+). Catalyzes the reduction of hydroxylamine to form NH(3) and H(2)O. This is Hydroxylamine reductase from Crocosphaera subtropica (strain ATCC 51142 / BH68) (Cyanothece sp. (strain ATCC 51142)).